The following is a 225-amino-acid chain: UPF0173 metal-dependent hydrolase Tneu_1348 (225 aa).

This sequence belongs to the UPF0173 family.

This is UPF0173 metal-dependent hydrolase Tneu_1348 from Pyrobaculum neutrophilum (strain DSM 2338 / JCM 9278 / NBRC 100436 / V24Sta) (Thermoproteus neutrophilus).